Consider the following 323-residue polypeptide: Leucine-rich repeat-containing protein 46 (323 aa).

LRR repeat units follow at residues Glu49 to Arg70, Asn71 to Thr92, Ser93 to Gln114, and Tyr115 to Pro135. The 43-residue stretch at Asn146 to Asp188 folds into the LRRCT domain. Phosphothreonine is present on Thr178. Phosphoserine is present on residues Ser179, Ser185, and Ser186. A coiled-coil region spans residues Arg203–His228. Positions Met249–Lys323 are disordered. The segment covering Pro267–Met316 has biased composition (low complexity). Position 303 is a phosphoserine (Ser303).

In terms of tissue distribution, testis-specific (at protein level).

Its subcellular location is the cell projection. It localises to the cilium. It is found in the flagellum. In terms of biological role, required for normal spermatogenesis and male fertility. Plays an important role in sperm flagellum biogenesis. The chain is Leucine-rich repeat-containing protein 46 (Lrrc46) from Mus musculus (Mouse).